Consider the following 349-residue polypeptide: MTFLKMKSLSFFFTILLSLSTLFTISNARKFNVGGSGAWVTNPPENYESWSGKNRFLVHDTLYFSYAKGADSVLEVNKADYDACNTKNPIKRVDDGDSEISLDRYGPFYFISGNEDNCKKGQKLNVVVISARIPSTAQSPHAAAPGSSTPGSMTPPGGAHSPKSSSPVSPTTSPPGSTTPPGGAHSPKSSSAVSPATSPPGSMAPKSGSPVSPTTSPPAPPKSTSPVSPSSAPMTSPPAPMAPKSSSTIPPSSAPMTSPPGSMAPKSSSPVSNSPTVSPSLAPGGSTSSSPSDSPSGSAMGPSGDGPSAAGDISTPAGAPGQKKSSANGMTVMSITTVLSLVLTIFLSA.

Positions 1–28 (MTFLKMKSLSFFFTILLSLSTLFTISNA) are cleaved as a signal peptide. In terms of domain architecture, Phytocyanin spans 29 to 130 (RKFNVGGSGA…GQKLNVVVIS (102 aa)). Cysteine 84 and cysteine 118 are joined by a disulfide. A disordered region spans residues 136–330 (TAQSPHAAAP…GQKKSSANGM (195 aa)). Low complexity-rich tracts occupy residues 145 to 201 (PGSS…SPPG) and 224 to 234 (TSPVSPSSAPM). Residues 249–260 (IPPSSAPMTSPP) show a composition bias toward polar residues. The span at 263 to 312 (MAPKSSSPVSNSPTVSPSLAPGGSTSSSPSDSPSGSAMGPSGDGPSAAGD) shows a compositional bias: low complexity. A lipid anchor (GPI-anchor amidated serine) is attached at serine 325. Residues 326–349 (SANGMTVMSITTVLSLVLTIFLSA) constitute a propeptide, removed in mature form.

It belongs to the early nodulin-like (ENODL) family. Mostly expressed in leaves and roots, and, to a lower extent, in seedlings, stems and flowers, but barely in seeds.

The protein localises to the cell membrane. Functionally, may act as a carbohydrate transporter. The chain is Early nodulin-like protein 2 from Arabidopsis thaliana (Mouse-ear cress).